The following is a 221-amino-acid chain: Eukaryotic translation initiation factor NCBP (221 aa).

It belongs to the eukaryotic initiation factor 4E family. As to quaternary structure, EIF4F is a multi-subunit complex, the composition of which varies with external and internal environmental conditions. It is composed of at least EIF4A, EIF4E and EIF4G. EIF4E is also known to interact with other partners. In higher plants two isoforms of EIF4F have been identified, named isoform EIF4F and isoform EIF(iso)4F. Isoform EIF4F has subunits p220 and p26, whereas isoform EIF(iso)4F has subunits p82 and p28.

In terms of biological role, recognizes and binds the 7-methylguanosine-containing mRNA cap during an early step in the initiation of protein synthesis and facilitates ribosome binding by inducing the unwinding of the mRNAs secondary structures. This is Eukaryotic translation initiation factor NCBP (NCBP) from Arabidopsis thaliana (Mouse-ear cress).